Consider the following 296-residue polypeptide: Bifunctional protein FolD (296 aa).

NADP(+) is bound by residues 166 to 168, Ser191, and Ile232; that span reads GRS.

This sequence belongs to the tetrahydrofolate dehydrogenase/cyclohydrolase family. Homodimer.

The enzyme catalyses (6R)-5,10-methylene-5,6,7,8-tetrahydrofolate + NADP(+) = (6R)-5,10-methenyltetrahydrofolate + NADPH. It catalyses the reaction (6R)-5,10-methenyltetrahydrofolate + H2O = (6R)-10-formyltetrahydrofolate + H(+). Its pathway is one-carbon metabolism; tetrahydrofolate interconversion. Its function is as follows. Catalyzes the oxidation of 5,10-methylenetetrahydrofolate to 5,10-methenyltetrahydrofolate and then the hydrolysis of 5,10-methenyltetrahydrofolate to 10-formyltetrahydrofolate. The polypeptide is Bifunctional protein FolD (Cereibacter sphaeroides (strain ATCC 17023 / DSM 158 / JCM 6121 / CCUG 31486 / LMG 2827 / NBRC 12203 / NCIMB 8253 / ATH 2.4.1.) (Rhodobacter sphaeroides)).